The primary structure comprises 297 residues: CCAAT/enhancer-binding protein beta (297 aa).

The required for Lys-134 sumoylation stretch occupies residues 1-22 (MHRLLAWDAACLPPPPAAFRPM). Arg-3 carries the post-translational modification Asymmetric dimethylarginine; by CARM1. Residues 22-105 (MEVANFYYEP…YGAKPSKKPS (84 aa)) form a required for MYC transcriptional repression region. Lys-39 bears the N6-acetyllysine; alternate mark. Lys-39 carries the post-translational modification N6-methylated lysine; alternate. N6-acetyllysine; by KAT2A and KAT2B is present on residues Lys-99 and Lys-102. Lys-103 is modified (N6-acetyllysine; by KAT2A and KAT2B; alternate). Residue Lys-103 forms a Glycyl lysine isopeptide (Lys-Gly) (interchain with G-Cter in SUMO2); alternate linkage. At Ser-105 the chain carries Phosphoserine; by RPS6KA1 and PKC/PRKCA. Lys-134 participates in a covalent cross-link: Glycyl lysine isopeptide (Lys-Gly) (interchain with G-Cter in SUMO2); alternate. Lys-134 participates in a covalent cross-link: Glycyl lysine isopeptide (Lys-Gly) (interchain with G-Cter in SUMO); alternate. Lys-145 is covalently cross-linked (Glycyl lysine isopeptide (Lys-Gly) (interchain with G-Cter in SUMO2)). The tract at residues 172-201 (SGSSGSLSTSSSSSPPGTPSPADAKAAPAA) is disordered. At Thr-180 the chain carries Phosphothreonine; by GSK3-beta. Residues Ser-181 and Ser-182 are each glycosylated (O-linked (GlcNAc) serine). The residue at position 185 (Ser-185) is a Phosphoserine; by GSK3-beta. At Thr-189 the chain carries Phosphothreonine; by RPS6KA1, CDK2 and MAPK. Residues Lys-212 and Lys-214 each participate in a glycyl lysine isopeptide (Lys-Gly) (interchain with G-Cter in SUMO2) cross-link. In terms of domain architecture, bZIP spans 223–286 (SDEYKMRRER…STLRNLFKQL (64 aa)). Positions 227-247 (KMRRERNNIAVRKSRDKAKMR) are basic motif. Ser-240 is modified (phosphoserine; by PKC/PRKCA). The leucine-zipper stretch occupies residues 249–256 (LETQHKVL). Ser-277 carries the post-translational modification Phosphoserine; by CaMK2. A Glycyl lysine isopeptide (Lys-Gly) (interchain with G-Cter in SUMO2) cross-link involves residue Lys-284.

Belongs to the bZIP family. C/EBP subfamily. Binds DNA as a homodimer and as a heterodimer. Interacts with MYB; within the complex, MYB and CEBPB bind to different promoter regions. Interacts with ATF4. Binds DNA as a heterodimer with ATF4. Can form stable heterodimers with CEBPA, CEBPD, CEBPE and CEBPG. Interacts with SIX1. Isoform 2 and isoform 3 also form heterodimers. Interacts with TRIM28 and PTGES2. Interacts with PRDM16. Interacts with CCDC85B. Forms a complex with THOC5. Interacts with ZNF638; this interaction increases transcriptional activation. Interacts with CIDEA and CIDEC; these interactions increase transcriptional activation of a subset of CEBPB downstream target genes. Interacts with DDIT3/CHOP. Interacts with EP300; recruits EP300 to chromatin. Interacts with RORA; the interaction disrupts interaction with EP300. Interacts (not methylated) with MED23, MED26, SMARCA2, SMARCB1 and SMARCC1. Interacts with KAT2A and KAT2B. Interacts with ATF5; EP300 is required for ATF5 and CEBPB interaction and DNA binding. Interacts with NFE2L1; the heterodimer represses expression of DSPP during odontoblast differentiation. In terms of processing, phosphorylated at Thr-189 by MAPK and CDK2, serves to prime phosphorylation at Thr-180 and Ser-185 by GSK3B and acquire DNA-binding as well as transactivation activities, required to induce adipogenesis. MAPK and CDK2 act sequentially to maintain Thr-189 in the primed phosphorylated state during mitotical cloning expansion and thereby progression of terminal differentiation. Phosphorylation at Ser-105 enhances transactivation activity. Phosphorylation at Ser-277 in response to calcium increases transactivation activity. Phosphorylated at Thr-189 by RPS6KA1. Methylated. Methylation at Arg-3 by CARM1 and at Lys-39 by EHMT2 inhibit transactivation activity. Methylation is probably inhibited by phosphorylation at Thr-189. Post-translationally, sumoylated by polymeric chains of SUMO2 or SUMO3. Sumoylation at Lys-134 is required for inhibition of T-cells proliferation. In adipocytes, sumoylation at Lys-134 by PIAS1 leads to ubiquitination and subsequent proteasomal degradation. Desumoylated by SENP2, which abolishes ubiquitination and stabilizes protein levels. In terms of processing, ubiquitinated, leading to proteasomal degradation. O-glycosylated, glycosylation at Ser-181 and Ser-182 prevents phosphorylation on Thr-189, Ser-185 and Thr-180 and DNA binding activity which delays the adipocyte differentiation program. Post-translationally, acetylated. Acetylation at Lys-39 is an important and dynamic regulatory event that contributes to its ability to transactivate target genes, including those associated with adipogenesis and adipocyte function. Deacetylation by HDAC1 represses its transactivation activity. Acetylated by KAT2A and KAT2B within a cluster of lysine residues between amino acids 99-103, this acetylation is strongly induced by glucocorticoid treatment and enhances transactivation activity. In terms of tissue distribution, liver and lung.

Its subcellular location is the nucleus. The protein localises to the cytoplasm. In terms of biological role, important transcription factor regulating the expression of genes involved in immune and inflammatory responses. Also plays a significant role in adipogenesis, as well as in the gluconeogenic pathway, liver regeneration, and hematopoiesis. The consensus recognition site is 5'-T[TG]NNGNAA[TG]-3'. Its functional capacity is governed by protein interactions and post-translational protein modifications. During early embryogenesis, plays essential and redundant roles with CEBPA. Has a promitotic effect on many cell types such as hepatocytes and adipocytes but has an antiproliferative effect on T-cells by repressing MYC expression, facilitating differentiation along the T-helper 2 lineage. Binds to regulatory regions of several acute-phase and cytokines genes and plays a role in the regulation of acute-phase reaction and inflammation. Also plays a role in intracellular bacteria killing. During adipogenesis, is rapidly expressed and, after activation by phosphorylation, induces CEBPA and PPARG, which turn on the series of adipocyte genes that give rise to the adipocyte phenotype. The delayed transactivation of the CEBPA and PPARG genes by CEBPB appears necessary to allow mitotic clonal expansion and thereby progression of terminal differentiation. Essential for female reproduction because of a critical role in ovarian follicle development. Restricts osteoclastogenesis: together with NFE2L1; represses expression of DSPP during odontoblast differentiation. Its function is as follows. Essential for gene expression induction in activated macrophages. Plays a major role in immune responses such as CD4(+) T-cell response, granuloma formation and endotoxin shock. Not essential for intracellular bacteria killing. Functionally, acts as a dominant negative through heterodimerization with isoform 2. Promotes osteoblast differentiation and osteoclastogenesis. This Rattus norvegicus (Rat) protein is CCAAT/enhancer-binding protein beta.